A 515-amino-acid polypeptide reads, in one-letter code: Signal transduction histidine-protein kinase/phosphatase MprB (515 aa).

Over 1 to 24 the chain is Cytoplasmic; sequence MTLPPQPSRLKPPRNTSSLSLRWR. Residues 25–45 form a helical membrane-spanning segment; sequence VMLLAMSMVAMVVVLMSVAVY. Over 46-165 the chain is Extracellular; sequence AVVSRALYDD…TGQVLGRLGT (120 aa). A helical transmembrane segment spans residues 166–186; it reads VLLIVGGVGVAVAAIAGGMVA. Positions 187–239 constitute an HAMP domain; that stretch reads RAGLRPVGRLTQAAERVARTDDLRPIPVFGSDELARLTEAFNMMLRALTESRE. The Cytoplasmic portion of the chain corresponds to 187–515; the sequence is RAGLRPVGRL…GKSRSASKEL (329 aa). The Histidine kinase domain occupies 247–467; the sequence is DAGHELRTPL…SFYVMLPGRP (221 aa). H250 bears the Phosphohistidine; by autocatalysis mark. The disordered stretch occupies residues 468–515; the sequence is LTPGGNGTAPVPAAQFDPDMRSAGSRADRRVIKNTETNGKSRSASKEL.

Mg(2+) is required as a cofactor. Mn(2+) serves as cofactor. Post-translationally, autophosphorylated.

Its subcellular location is the cell membrane. The catalysed reaction is ATP + protein L-histidine = ADP + protein N-phospho-L-histidine.. Its function is as follows. Member of the two-component regulatory system MprB/MprA which contributes to maintaining a balance among several systems involved in stress resistance and is required for establishment and maintenance of persistent infection in the host. In response to environmental signals MprB acts both as a membrane-associated protein kinase that undergoes autophosphorylation and subsequently transfers the phosphate to MprA, and a protein phosphatase that dephosphorylates phospho-MprA. The polypeptide is Signal transduction histidine-protein kinase/phosphatase MprB (mprB) (Mycobacterium sp. (strain JLS)).